The primary structure comprises 650 residues: Chaperone protein DnaK (650 aa).

At threonine 200 the chain carries Phosphothreonine; by autocatalysis. A compositionally biased stretch (low complexity) spans 611–634; that stretch reads AQQAGAAGAAGAAAEGASAQGGAQ. The disordered stretch occupies residues 611–650; that stretch reads AQQAGAAGAAGAAAEGASAQGGAQPPDDVVDADFKEVKKD.

This sequence belongs to the heat shock protein 70 family.

In terms of biological role, acts as a chaperone. This is Chaperone protein DnaK from Burkholderia pseudomallei (strain 1710b).